A 90-amino-acid polypeptide reads, in one-letter code: Probable Fe(2+)-trafficking protein (90 aa).

This sequence belongs to the Fe(2+)-trafficking protein family.

Could be a mediator in iron transactions between iron acquisition and iron-requiring processes, such as synthesis and/or repair of Fe-S clusters in biosynthetic enzymes. This is Probable Fe(2+)-trafficking protein from Aliivibrio salmonicida (strain LFI1238) (Vibrio salmonicida (strain LFI1238)).